Consider the following 177-residue polypeptide: MGIPKEGEFVTIQSYKHDGHLHRTWRDTMVLKTSEYSLIGVNDHTLVTESDGRRWVTREPAIVYFHKKYWFNIIAMIREKGVSYYCNLASPYVLDDEALKYIDYDLDIKVFPDGEKRLLDVDEYEFHSKLMDYPEDIDFILKENVKTLVDWINNEKGPFSPEYVDIWYQRYQQLSKK.

The active-site Proton donor is the Arg-23. The Mg(2+) site is built by Asn-87, Asp-103, Asp-105, Asp-107, Asp-120, and Glu-123.

Belongs to the Ntdp family. Mg(2+) serves as cofactor.

It carries out the reaction a ribonucleoside 5'-triphosphate + H2O = a ribonucleoside 5'-diphosphate + phosphate + H(+). The catalysed reaction is a ribonucleoside 5'-diphosphate + H2O = a ribonucleoside 5'-phosphate + phosphate + H(+). Has nucleoside phosphatase activity towards nucleoside triphosphates and nucleoside diphosphates. The chain is Nucleoside triphosphate/diphosphate phosphatase from Enterococcus faecalis (strain ATCC 700802 / V583).